A 248-amino-acid chain; its full sequence is Triosephosphate isomerase (248 aa).

Substrate is bound at residue 9–11 (NWK). The Electrophile role is filled by histidine 94. Residue glutamate 166 is the Proton acceptor of the active site. Residues glycine 172, serine 212, and 233–234 (GG) contribute to the substrate site.

It belongs to the triosephosphate isomerase family. As to quaternary structure, homodimer.

It localises to the cytoplasm. It catalyses the reaction D-glyceraldehyde 3-phosphate = dihydroxyacetone phosphate. It functions in the pathway carbohydrate biosynthesis; gluconeogenesis. Its pathway is carbohydrate degradation; glycolysis; D-glyceraldehyde 3-phosphate from glycerone phosphate: step 1/1. Functionally, involved in the gluconeogenesis. Catalyzes stereospecifically the conversion of dihydroxyacetone phosphate (DHAP) to D-glyceraldehyde-3-phosphate (G3P). In Alkaliphilus metalliredigens (strain QYMF), this protein is Triosephosphate isomerase.